The following is a 313-amino-acid chain: MAQQPTFASAALVSFFLALICSCSYAAWHHEKDDIPKSDVSLLEFPLNLELLEAEFFAWAAFGKGIDELEPELAKGGPSPIGVQKANLSPFIRDIIAQFAYQEFGHVRAIQSSVEGFPRPLLDLSAKSFATVMDSAFGKTLKPPFDPYANDINYLLACYVVPYVGLTGYVGANPKLESPVSRKLVAGLLAVEAGQDAIIRALLYERATDKVEPYGITVAEFTNKISELRNKLGDKGVKDLGLIVEPELGAEGKISGNVLAGDKNSLAFPRTPERCLGSCTAAAMRPSPAAFIPKAPTGKSPSLIWRIRAFSIV.

The first 26 residues, 1–26 (MAQQPTFASAALVSFFLALICSCSYA), serve as a signal peptide directing secretion.

The chain is Desiccation-related protein PCC13-62 from Craterostigma plantagineum (Blue gem).